A 138-amino-acid chain; its full sequence is RutC family protein UK114 (138 aa).

This sequence belongs to the RutC family.

Molecular chaperone. Seems to fulfill an ATP-independent, HSP70-like function in protein folding. May protect essential factors of cell proliferation during heat shock. No role in calpain activation. The polypeptide is RutC family protein UK114 (Drosophila melanogaster (Fruit fly)).